Consider the following 246-residue polypeptide: tRNA (guanine-N(1)-)-methyltransferase (246 aa).

S-adenosyl-L-methionine is bound by residues Gly-114 and 134–139 (IGDYIL).

It belongs to the RNA methyltransferase TrmD family. In terms of assembly, homodimer.

Its subcellular location is the cytoplasm. The enzyme catalyses guanosine(37) in tRNA + S-adenosyl-L-methionine = N(1)-methylguanosine(37) in tRNA + S-adenosyl-L-homocysteine + H(+). Its function is as follows. Specifically methylates guanosine-37 in various tRNAs. The sequence is that of tRNA (guanine-N(1)-)-methyltransferase from Coxiella burnetii (strain RSA 493 / Nine Mile phase I).